The following is a 149-amino-acid chain: MSQNHRILLLNGPNLNLLGKREPGIYGSKTLDEIVADLKHNAIELGVTLEHLQSNAEHELVSRIHQAMGQVDYIIINPAAFTHTSVAIRDALLGVAIPFIEVHLSNVHAREPFRHHSYLSDVAKGVICGLGADGYQFALTAAVHQLRAA.

The Proton acceptor role is filled by Tyr-26. Positions 77, 83, and 90 each coordinate substrate. The active-site Proton donor is the His-103. Residues 104-105 (LS) and Arg-114 each bind substrate.

It belongs to the type-II 3-dehydroquinase family. In terms of assembly, homododecamer.

The enzyme catalyses 3-dehydroquinate = 3-dehydroshikimate + H2O. It functions in the pathway metabolic intermediate biosynthesis; chorismate biosynthesis; chorismate from D-erythrose 4-phosphate and phosphoenolpyruvate: step 3/7. Its function is as follows. Catalyzes a trans-dehydration via an enolate intermediate. The protein is 3-dehydroquinate dehydratase of Aeromonas salmonicida (strain A449).